The chain runs to 312 residues: Ribosomal RNA small subunit methyltransferase H (312 aa).

S-adenosyl-L-methionine is bound by residues 33-35 (AGH), Asp-53, Phe-79, Asp-100, and Gln-107.

The protein belongs to the methyltransferase superfamily. RsmH family.

The protein localises to the cytoplasm. The enzyme catalyses cytidine(1402) in 16S rRNA + S-adenosyl-L-methionine = N(4)-methylcytidine(1402) in 16S rRNA + S-adenosyl-L-homocysteine + H(+). Functionally, specifically methylates the N4 position of cytidine in position 1402 (C1402) of 16S rRNA. This Clostridium acetobutylicum (strain ATCC 824 / DSM 792 / JCM 1419 / IAM 19013 / LMG 5710 / NBRC 13948 / NRRL B-527 / VKM B-1787 / 2291 / W) protein is Ribosomal RNA small subunit methyltransferase H.